The following is a 290-amino-acid chain: MGDGGAERDRGPARRAESGGGGGRCGDRSGAGDLRADGGGHSPTEVAGTSASSPAGSRESGADSDGQPGPGEADHCRRILVRDAKGTIREIVLPKGLDLDRPKRTRTSFTAEQLYRLEMEFQRCQYVVGRERTELARQLNLSETQVKVWFQNRRTKQKKDQSRDLEKRASSSASEAFATSNILRLLEQGRLLSVPRAPSLLALTPSLPGLPASHRGTSLGDPRNSSPRLNPLSSASASPPLPPPLPAVCFSSAPLLDLPAGYELGSSAFEPYSWLERKVGSASSCKKANT.

A compositionally biased stretch (basic and acidic residues) spans 1 to 17; sequence MGDGGAERDRGPARRAE. Residues 1 to 75 are disordered; the sequence is MGDGGAERDR…GQPGPGEADH (75 aa). Positions 102 to 161 form a DNA-binding region, homeobox; it reads PKRTRTSFTAEQLYRLEMEFQRCQYVVGRERTELARQLNLSETQVKVWFQNRRTKQKKDQ. The segment at 205–240 is disordered; that stretch reads PSLPGLPASHRGTSLGDPRNSSPRLNPLSSASASPP. Residues 222–238 are compositionally biased toward low complexity; that stretch reads PRNSSPRLNPLSSASAS.

This sequence belongs to the EMX homeobox family.

The protein localises to the nucleus. Functionally, transcription factor that may function in dorsoventral specification of the forebrain. Regulates the expression of Wnt signaling antagonists including the expression of a truncated TCF7L2 isoform that cannot bind CTNNB1 and acts therefore as a potent dominant-negative Wnt antagonist. Plays a crucial role in eye development and, in particular, in the specification of the ventral optic vesicle. May be a regulator of axial polarization in the retina. This Homo sapiens (Human) protein is Ventral anterior homeobox 2 (VAX2).